Reading from the N-terminus, the 337-residue chain is uncharacterized protein (337 aa).

Residues N248–L276 are a coiled coil. The tract at residues G285–L337 is disordered. Basic and acidic residues predominate over residues R287–E296. Over residues T297–T315 the composition is skewed to polar residues.

This is an uncharacterized protein from Invertebrate iridescent virus 3 (IIV-3).